A 706-amino-acid polypeptide reads, in one-letter code: Triadin (706 aa).

Residues 1–28 (MTEITAEGNASTTTTVIDSKNGSVPKSP) form a disordered region. The Cytoplasmic portion of the chain corresponds to 1 to 47 (MTEITAEGNASTTTTVIDSKNGSVPKSPGKVLKRTVTEDLVTTFSSP). Positions 8-24 (GNASTTTTVIDSKNGSV) are enriched in polar residues. Residues 48–68 (AAWLLVIALIITWSAVAVVMF) traverse the membrane as a helical segment. Residues 69-706 (DLVDYKNFSA…GKPNSPGPKQ (638 aa)) lie on the Lumenal side of the membrane. Asn-75 carries N-linked (GlcNAc...) asparagine glycosylation. Acidic residues predominate over residues 117-127 (DGDEEDDEGDE). Disordered regions lie at residues 117–265 (DGDE…EQKD), 281–663 (DLKP…KKQK), and 684–706 (FPVT…GPKQ). Composition is skewed to basic and acidic residues over residues 128–254 (DTAK…ESKE), 309–358 (PEEK…KSPD), 372–432 (TKKD…KEEV), 443–518 (AKKE…EVKP), 525–552 (IKKE…EKVL), 570–588 (KKAE…DKPK), and 599–621 (ESGK…RESH). N-linked (GlcNAc...) asparagine glycosylation occurs at Asn-625. Positions 628–651 (KAEKPARGSKEGFEDVPASKKAKE) are enriched in basic and acidic residues.

As to quaternary structure, interacts with CASQ2. Homooligomer of variable subunit number; disulfide-linked. Interacts with CASQ1 and RYR1 in skeletal muscle. Phosphorylated by CaMK2. Post-translationally, N-glycosylated. Detected in skeletal muscle and in heart (at protein level). Detected in skeletal muscle and in heart.

It is found in the sarcoplasmic reticulum membrane. Functionally, contributes to the regulation of lumenal Ca2+ release via the sarcoplasmic reticulum calcium release channels RYR1 and RYR2, a key step in triggering skeletal and heart muscle contraction. Required for normal organization of the triad junction, where T-tubules and the sarcoplasmic reticulum terminal cisternae are in close contact. Required for normal skeletal muscle strength. Plays a role in excitation-contraction coupling in the heart and in regulating the rate of heart beats. The protein is Triadin (TRDN) of Oryctolagus cuniculus (Rabbit).